A 139-amino-acid chain; its full sequence is Classical arabinogalactan protein 3 (139 aa).

The N-terminal stretch at 1 to 21 is a signal peptide; it reads MALKTLQALIFLGLFAASCLA. Gln22 bears the Pyrrolidone carboxylic acid mark. A disordered region spans residues 30–115; it reads TFLPPVESPS…PAPRADGPVA (86 aa). Composition is skewed to pro residues over residues 46–77 and 97–107; these read AEPP…PPTT and PSGPTPAPAPA. A lipid anchor (GPI-anchor amidated aspartate) is attached at Asp116. A propeptide spans 117-139 (removed in mature form); sequence SALTNKAFLVSTVIAGALYAVLA.

It belongs to the classical AGP family. O-glycosylated on the hydroxyproline residues. In terms of tissue distribution, expressed at a low level in roots.

Its subcellular location is the cell membrane. Functionally, proteoglycan that seems to be implicated in diverse developmental roles such as differentiation, cell-cell recognition, embryogenesis and programmed cell death. This chain is Classical arabinogalactan protein 3 (AGP3), found in Arabidopsis thaliana (Mouse-ear cress).